The primary structure comprises 426 residues: Glutamate-1-semialdehyde 2,1-aminomutase (426 aa).

Lys-265 carries the post-translational modification N6-(pyridoxal phosphate)lysine.

Belongs to the class-III pyridoxal-phosphate-dependent aminotransferase family. HemL subfamily. In terms of assembly, homodimer. The cofactor is pyridoxal 5'-phosphate.

It is found in the cytoplasm. The catalysed reaction is (S)-4-amino-5-oxopentanoate = 5-aminolevulinate. Its pathway is porphyrin-containing compound metabolism; protoporphyrin-IX biosynthesis; 5-aminolevulinate from L-glutamyl-tRNA(Glu): step 2/2. This chain is Glutamate-1-semialdehyde 2,1-aminomutase, found in Shigella flexneri serotype 5b (strain 8401).